We begin with the raw amino-acid sequence, 125 residues long: Small ribosomal subunit protein uS12 (125 aa).

The residue at position 89 (aspartate 89) is a 3-methylthioaspartic acid.

It belongs to the universal ribosomal protein uS12 family. In terms of assembly, part of the 30S ribosomal subunit. Contacts proteins S8 and S17. May interact with IF1 in the 30S initiation complex.

With S4 and S5 plays an important role in translational accuracy. Functionally, interacts with and stabilizes bases of the 16S rRNA that are involved in tRNA selection in the A site and with the mRNA backbone. Located at the interface of the 30S and 50S subunits, it traverses the body of the 30S subunit contacting proteins on the other side and probably holding the rRNA structure together. The combined cluster of proteins S8, S12 and S17 appears to hold together the shoulder and platform of the 30S subunit. This Cupriavidus pinatubonensis (strain JMP 134 / LMG 1197) (Cupriavidus necator (strain JMP 134)) protein is Small ribosomal subunit protein uS12.